Here is a 494-residue protein sequence, read N- to C-terminus: Subtilisin-like serine protease Pen ch 18.0101 (494 aa).

The first 16 residues, 1 to 16 (MKGFLSLTLLPLLVAA), serve as a signal peptide directing secretion. The propeptide at 17–136 (SPVAVNSIHN…IEKDSEVRTM (120 aa)) is removed in mature form. In terms of domain architecture, Inhibitor I9 spans 43–136 (SYIVVFKKHV…IEKDSEVRTM (94 aa)). One can recognise a Peptidase S8 domain in the interval 146 to 448 (PWGLARISHR…GGSANYTKIL (303 aa)). 2 igE-binding regions span residues 180 to 198 (VIDT…RANW) and 209 to 231 (EDGN…GVAK). Catalysis depends on charge relay system residues aspartate 182 and histidine 214. N-linked (GlcNAc...) asparagine glycans are attached at residues asparagine 244 and asparagine 280. Serine 376 (charge relay system) is an active-site residue. Asparagine 443 carries N-linked (GlcNAc...) asparagine glycosylation. A propeptide spans 454–494 (KAHNAETTVEDRIGIIIDSAEKAFHKELGAIYSEIKDAVSV) (removed in mature form).

The protein belongs to the peptidase S8 family.

Its function is as follows. Serine protease. This is Subtilisin-like serine protease Pen ch 18.0101 from Penicillium rubens.